Consider the following 365-residue polypeptide: Histidinol-phosphate aminotransferase (365 aa).

At K223 the chain carries N6-(pyridoxal phosphate)lysine.

Belongs to the class-II pyridoxal-phosphate-dependent aminotransferase family. Histidinol-phosphate aminotransferase subfamily. In terms of assembly, homodimer. The cofactor is pyridoxal 5'-phosphate.

It carries out the reaction L-histidinol phosphate + 2-oxoglutarate = 3-(imidazol-4-yl)-2-oxopropyl phosphate + L-glutamate. It participates in amino-acid biosynthesis; L-histidine biosynthesis; L-histidine from 5-phospho-alpha-D-ribose 1-diphosphate: step 7/9. The polypeptide is Histidinol-phosphate aminotransferase (Bacillus pumilus (strain SAFR-032)).